The following is a 150-amino-acid chain: Large ribosomal subunit protein bL9 (150 aa).

This sequence belongs to the bacterial ribosomal protein bL9 family.

Its function is as follows. Binds to the 23S rRNA. This Burkholderia pseudomallei (strain 668) protein is Large ribosomal subunit protein bL9.